A 219-amino-acid polypeptide reads, in one-letter code: Probable nicotinate-nucleotide adenylyltransferase (219 aa).

It belongs to the NadD family.

The enzyme catalyses nicotinate beta-D-ribonucleotide + ATP + H(+) = deamido-NAD(+) + diphosphate. It functions in the pathway cofactor biosynthesis; NAD(+) biosynthesis; deamido-NAD(+) from nicotinate D-ribonucleotide: step 1/1. Its function is as follows. Catalyzes the reversible adenylation of nicotinate mononucleotide (NaMN) to nicotinic acid adenine dinucleotide (NaAD). This chain is Probable nicotinate-nucleotide adenylyltransferase, found in Erythrobacter litoralis (strain HTCC2594).